The sequence spans 143 residues: Transcriptional regulator MraZ (143 aa).

SpoVT-AbrB domains are found at residues 5-47 and 76-119; these read THSP…SQKE and ASDE…DADA.

Belongs to the MraZ family. Forms oligomers.

It is found in the cytoplasm. It localises to the nucleoid. The protein is Transcriptional regulator MraZ of Paenarthrobacter aurescens (strain TC1).